Consider the following 88-residue polypeptide: N-alpha-acetyltransferase 38, NatC auxiliary subunit (88 aa).

The region spanning 1-72 (MDILKLSDFI…VKTIMIDKPV (72 aa)) is the Sm domain.

In terms of assembly, component of the N-terminal acetyltransferase C (NatC) complex, composed of the catalytic subunit Naa30/MAK3, a large auxiliary subunit Naa35/MAK10 and a small auxiliary subunit Naa38/MAK31.

Component of the NatC N-terminal acetyltransferase, which associates with the ribosome to acetylate nascent protein chains in a cotranslational manner. NatC acetylates protein N-termini starting with methionine, followed by a hydrophobic or amphipathic amino acid, with amino acids at positions 3 and 4 also contributing to NatC recognition. The first 4 amino acids of cognate substrates are recognized at the Naa30/MAK3-Naa35/MAK10 interface. NatC-dependent acetylation targets various substrate proteins to specific subcellular sites, including isoform 2 of tRNA-specific methyltransferase Trm1 to the inner nuclear membrane. Catalyzes the acetylation of the N-terminal Met of ARF-like GTPase ARL3, which is required for its Golgi localization via interaction with the Golgi-localized integral membrane protein SYS1, which may serve as a receptor for acetylated ARL3. Catalyzes the acetylation of the N-terminal Met of L-A virus Gag protein. MAK31 is necessary for the structural stability of L-A double-stranded RNA-containing particles. Necessary for growth at 37 degrees Celsius as well as for maintenance of the killer plasmid. This chain is N-alpha-acetyltransferase 38, NatC auxiliary subunit (MAK31), found in Saccharomyces cerevisiae (strain ATCC 204508 / S288c) (Baker's yeast).